The primary structure comprises 226 residues: V-type proton ATPase subunit E 2 (226 aa).

It belongs to the V-ATPase E subunit family. V-ATPase is a heteromultimeric enzyme made up of two complexes: the ATP-hydrolytic V1 complex and the proton translocation V0 complex. The V1 complex consists of three catalytic AB heterodimers that form a heterohexamer, three peripheral stalks each consisting of EG heterodimers, one central rotor including subunits D and F, and the regulatory subunits C and H. The proton translocation complex V0 consists of the proton transport subunit a, a ring of proteolipid subunits c9c'', rotary subunit d, subunits e and f, and the accessory subunits ATP6AP1/Ac45 and ATP6AP2/PRR. Testis specific.

Subunit of the V1 complex of vacuolar(H+)-ATPase (V-ATPase), a multisubunit enzyme composed of a peripheral complex (V1) that hydrolyzes ATP and a membrane integral complex (V0) that translocates protons. V-ATPase is responsible for acidifying and maintaining the pH of intracellular compartments and in some cell types, is targeted to the plasma membrane, where it is responsible for acidifying the extracellular environment. This is V-type proton ATPase subunit E 2 (Atp6v1e2) from Mus musculus (Mouse).